Here is a 278-residue protein sequence, read N- to C-terminus: Bifunctional protein FolD (278 aa).

NADP(+)-binding positions include 165-167 (GRS) and Ser-190.

This sequence belongs to the tetrahydrofolate dehydrogenase/cyclohydrolase family. As to quaternary structure, homodimer.

It carries out the reaction (6R)-5,10-methylene-5,6,7,8-tetrahydrofolate + NADP(+) = (6R)-5,10-methenyltetrahydrofolate + NADPH. The catalysed reaction is (6R)-5,10-methenyltetrahydrofolate + H2O = (6R)-10-formyltetrahydrofolate + H(+). It functions in the pathway one-carbon metabolism; tetrahydrofolate interconversion. In terms of biological role, catalyzes the oxidation of 5,10-methylenetetrahydrofolate to 5,10-methenyltetrahydrofolate and then the hydrolysis of 5,10-methenyltetrahydrofolate to 10-formyltetrahydrofolate. In Clostridium tetani (strain Massachusetts / E88), this protein is Bifunctional protein FolD.